The following is a 160-amino-acid chain: Peripheral myelin protein 22 (160 aa).

A topological domain (cytoplasmic) is located at residue M1. The helical transmembrane segment at 2–31 (LLLLLGILFLHIAVLVLLFVSTIVSQWLVG) threads the bilayer. The Extracellular portion of the chain corresponds to 32 to 64 (NGHRTDLWQNCTTSALGAVQHCYSSSVSEWLQS). Residue N41 is glycosylated (N-linked (GlcNAc...) asparagine). The chain crosses the membrane as a helical span at residues 65–91 (VQATMILSVIFSVLSLFLFFCQLFTLT). Residues 92–95 (KGGR) lie on the Cytoplasmic side of the membrane. The chain crosses the membrane as a helical span at residues 96-119 (FYITGVFQILAGLCVMSAAAIYTV). Residues 120 to 133 (RHSEWHVNNDYSYG) are Extracellular-facing. Residues 134 to 156 (FAYILAWVAFPLALLSGIIYVIL) traverse the membrane as a helical segment. Residues 157–160 (RKRE) are Cytoplasmic-facing.

This sequence belongs to the PMP-22/EMP/MP20 family. Ubiquitinated by the DCX(DCAF13) E3 ubiquitin ligase complex, leading to its degradation. In terms of tissue distribution, found exclusively in the peripheral nervous system. Present in both myelinating and nonmyelinating Schwann cells. Found in the tumors of Schwann cell lineage where axons are present (neurofibromas) but not where axons are absent (schwannomas).

The protein localises to the cell membrane. Might be involved in growth regulation, and in myelinization in the peripheral nervous system. In Rattus norvegicus (Rat), this protein is Peripheral myelin protein 22 (Pmp22).